The sequence spans 163 residues: NADH-quinone oxidoreductase subunit I (163 aa).

4Fe-4S ferredoxin-type domains follow at residues 53–83 (LRRYPNGEERCIACKLCEAICPAQAITIEAG) and 94–123 (VRYDIDMVKCIYCGFCQEACPVDAIVEGPN). 8 residues coordinate [4Fe-4S] cluster: Cys-63, Cys-66, Cys-69, Cys-73, Cys-103, Cys-106, Cys-109, and Cys-113.

Belongs to the complex I 23 kDa subunit family. As to quaternary structure, NDH-1 is composed of 14 different subunits. Subunits NuoA, H, J, K, L, M, N constitute the membrane sector of the complex. It depends on [4Fe-4S] cluster as a cofactor.

Its subcellular location is the cell inner membrane. It carries out the reaction a quinone + NADH + 5 H(+)(in) = a quinol + NAD(+) + 4 H(+)(out). Functionally, NDH-1 shuttles electrons from NADH, via FMN and iron-sulfur (Fe-S) centers, to quinones in the respiratory chain. The immediate electron acceptor for the enzyme in this species is believed to be ubiquinone. Couples the redox reaction to proton translocation (for every two electrons transferred, four hydrogen ions are translocated across the cytoplasmic membrane), and thus conserves the redox energy in a proton gradient. The sequence is that of NADH-quinone oxidoreductase subunit I from Brucella canis (strain ATCC 23365 / NCTC 10854 / RM-666).